Reading from the N-terminus, the 1989-residue chain is Zinc finger C3H1 domain-containing protein (1989 aa).

Disordered stretches follow at residues 1-133 (MATA…RPSF), 148-218 (GRPY…SKNE), 251-290 (SSKE…PEEK), and 310-365 (LPGD…LGED). At Ala2 the chain carries N-acetylalanine. Phosphoserine is present on residues Ser15, Ser28, and Ser34. Residues 20–32 (GELEDGEISDDDN) show a composition bias toward acidic residues. Residues 33–44 (NSQIRSRSSSSS) are compositionally biased toward low complexity. A compositionally biased stretch (gly residues) spans 62-72 (RGGGSGGGGGS). Composition is skewed to low complexity over residues 114–132 (PPSV…PRPS), 183–192 (GFSSSQSWRE), and 201–210 (KSFGRSPSRK). A Phosphoserine modification is found at Ser128. A coiled-coil region spans residues 219-259 (NCVEETFEDLLLKYKQIQLELECINKDEKLALSSKEENVQE). A Phosphoserine modification is found at Ser251. Over residues 251 to 262 (SSKEENVQEDPK) the composition is skewed to basic and acidic residues. Over residues 266 to 279 (FEDQTSTDNVSITK) the composition is skewed to polar residues. Residues 280-290 (DSSKEVAPEEK) are compositionally biased toward basic and acidic residues. Residues 330–340 (KSDTTDSSQGL) show a composition bias toward polar residues. A phosphoserine mark is found at Ser352 and Ser383. The stretch at 358–389 (SEKKLGEDEEELSELQLRLLALQSASKKWQQK) forms a coiled coil. 2 disordered regions span residues 385 to 671 (KWQQ…SNLS) and 711 to 770 (LNDS…PEAL). The segment covering 392–402 (QVMKESKEKLT) has biased composition (basic and acidic residues). Residues 430 to 440 (ALRKQQTKAWK) show a composition bias toward basic residues. Residues 432–487 (RKQQTKAWKKLQQQKEQERQKEEDQRKQAEEEERRKREEEIRKIRDLSNQEEQYNR) are a coiled coil. 2 stretches are compositionally biased toward basic and acidic residues: residues 444–479 (QQKE…RDLS) and 501–515 (KSSD…DKQP). The span at 527 to 537 (NYEEVAMDTDS) shows a compositional bias: acidic residues. The span at 574–583 (VSSLPPLSQP) shows a compositional bias: low complexity. Over residues 594-616 (PLPPLPPLPPLPPEDPEQPPKPP) the composition is skewed to pro residues. Over residues 647 to 671 (TSSNSDPPSPPVLNNSHPVPRSNLS) the composition is skewed to polar residues. Phosphoserine is present on residues Ser662, Ser714, Ser717, and Ser719. A compositionally biased stretch (basic and acidic residues) spans 755–770 (PKSEKENDPLRTPEAL). A Phosphothreonine modification is found at Thr766. Residues Ser805 and Ser809 each carry the phosphoserine modification. Residues 847-909 (LKNLVQQEAK…QQRVTIKKAL (63 aa)) adopt a coiled-coil conformation. Phosphoserine occurs at positions 948, 949, and 953. A coiled-coil region spans residues 965–989 (EKRRLQKLEYEYALKIQKLKEARAL). Residues Ser998 and Ser1046 each carry the phosphoserine modification. The C3H1-type zinc finger occupies 1185–1206 (FCRFDLTGTCNDDDCQWQHIQD). Residues Ser1301, Ser1303, and Ser1304 each carry the phosphoserine modification. TPR repeat units lie at residues 1361–1400 (VQLW…NKDN), 1401–1434 (PEIW…APDY), 1438–1471 (WTFL…ETSN), 1478–1511 (LEAL…ANDG), 1602–1635 (LPLY…CPIN), 1636–1669 (CQLL…NPQN), and 1745–1778 (PYLW…AMRC).

In terms of assembly, component of the poly(A) tail exosome targeting (PAXT) complex made of accessory factors, such as PABPN1, ZFC3H1 and MTREX, and which directs a subset of long and polyadenylated poly(A) RNAs for exosomal degradation. Co-localizes with component of the CBC-ARS2 (CBCA) complex. Binds to RNA exosome components. Interacts with NCBP1/CBP80, ZC3H18, MTREX and PABPN1 in a RNase-insensitive manner, and with PABPC4, PABPC1 and ZC3H14 in a RNase-sensitive manner.

The protein resides in the nucleus. Its function is as follows. Subunit of the trimeric poly(A) tail exosome targeting (PAXT) complex, a complex that directs a subset of long and polyadenylated poly(A) RNAs for exosomal degradation. The RNA exosome is fundamental for the degradation of RNA in eukaryotic nuclei. Substrate targeting is facilitated by its cofactor MTREX, which links to RNA-binding protein adapters. The polypeptide is Zinc finger C3H1 domain-containing protein (ZFC3H1) (Homo sapiens (Human)).